Reading from the N-terminus, the 88-residue chain is MLTAQDKQKIIKENQLAEGDTGSPEVQVALLTARINDLQGHFETHKKDNHSRRGLLRLVSQRRKLLDYLHDKDVERYRSLIKKLNIRR.

It belongs to the universal ribosomal protein uS15 family. Part of the 30S ribosomal subunit. Forms a bridge to the 50S subunit in the 70S ribosome, contacting the 23S rRNA.

In terms of biological role, one of the primary rRNA binding proteins, it binds directly to 16S rRNA where it helps nucleate assembly of the platform of the 30S subunit by binding and bridging several RNA helices of the 16S rRNA. Forms an intersubunit bridge (bridge B4) with the 23S rRNA of the 50S subunit in the ribosome. In Francisella tularensis subsp. novicida (strain U112), this protein is Small ribosomal subunit protein uS15.